Reading from the N-terminus, the 90-residue chain is N(2)-fixation sustaining protein CowN (90 aa).

It belongs to the CowN family.

Is required to sustain N(2)-dependent growth in the presence of low levels of carbon monoxide (CO). Probably acts by protecting the N(2) fixation ability of the nitrogenase complex, which is inactivated in the presence of CO. In Methylocella silvestris (strain DSM 15510 / CIP 108128 / LMG 27833 / NCIMB 13906 / BL2), this protein is N(2)-fixation sustaining protein CowN.